We begin with the raw amino-acid sequence, 237 residues long: Proteasome subunit beta (237 aa).

Residues 1 to 27 form a disordered region; sequence MSKFPDLPGMKNLDANPYEPELASFDD. Residues 1-42 constitute a propeptide, removed in mature form; by autocatalysis; it reads MSKFPDLPGMKNLDANPYEPELASFDDMDADAGDGDAVAKTG. T43 (nucleophile) is an active-site residue.

Belongs to the peptidase T1B family. The 20S proteasome core is composed of 14 alpha and 14 beta subunits that assemble into four stacked heptameric rings, resulting in a barrel-shaped structure. The two inner rings, each composed of seven catalytic beta subunits, are sandwiched by two outer rings, each composed of seven alpha subunits. The catalytic chamber with the active sites is on the inside of the barrel. Has a gated structure, the ends of the cylinder being occluded by the N-termini of the alpha-subunits. Is capped at one or both ends by the proteasome regulatory ATPase, PAN.

It is found in the cytoplasm. It carries out the reaction Cleavage of peptide bonds with very broad specificity.. Its activity is regulated as follows. The formation of the proteasomal ATPase PAN-20S proteasome complex, via the docking of the C-termini of PAN into the intersubunit pockets in the alpha-rings, triggers opening of the gate for substrate entry. Interconversion between the open-gate and close-gate conformations leads to a dynamic regulation of the 20S proteasome proteolysis activity. Functionally, component of the proteasome core, a large protease complex with broad specificity involved in protein degradation. The sequence is that of Proteasome subunit beta from Halomicrobium mukohataei (strain ATCC 700874 / DSM 12286 / JCM 9738 / NCIMB 13541) (Haloarcula mukohataei).